The primary structure comprises 119 residues: MARVKRGVQARRRHKKILDLAKGYYNARRKVFRVAKQAVIKAQQYAYIGRKQKKRNFRSLWITRINAAARINGLSYSRFMNGLLKAGITLDRKVLADIAVHDAAGFTALAEKAKGALAA.

This sequence belongs to the bacterial ribosomal protein bL20 family.

Its function is as follows. Binds directly to 23S ribosomal RNA and is necessary for the in vitro assembly process of the 50S ribosomal subunit. It is not involved in the protein synthesizing functions of that subunit. This Stenotrophomonas maltophilia (strain R551-3) protein is Large ribosomal subunit protein bL20.